The chain runs to 316 residues: MICENHTRVTEFILLGFTNNPEMQVSLFIFFLAIYTVTLLGNFLIVTVTSVDLALQTPMYFFLQNLSLLEVCFTLVMVPKMLVDLVSPRKIISFVGCGTQMYFFFFFGSSECFLLSMMAYDRFVAICNPLHYSVIMNRSLCLWMAIGSWMSGVPVSMLQTAWMMALPFCGPNAVDHFFCDGPPVLKLVTVDTTMYEMQALASTLLFIMFPFCLILVSYTRIIITILRMSSATGRQKAFSTCSSHLIVVSLFYGTASLTYLRPKSNQSPESKKLVSLSYTVITPMLNPIIYGLRNNEVKGAVKRTITQKVLQKLDVF.

The Extracellular portion of the chain corresponds to 1–25 (MICENHTRVTEFILLGFTNNPEMQV). An N-linked (GlcNAc...) asparagine glycan is attached at Asn5. Residues 26 to 46 (SLFIFFLAIYTVTLLGNFLIV) form a helical membrane-spanning segment. Topologically, residues 47 to 54 (TVTSVDLA) are cytoplasmic. A helical membrane pass occupies residues 55–75 (LQTPMYFFLQNLSLLEVCFTL). Residues 76-99 (VMVPKMLVDLVSPRKIISFVGCGT) lie on the Extracellular side of the membrane. A helical transmembrane segment spans residues 100-120 (QMYFFFFFGSSECFLLSMMAY). The Cytoplasmic portion of the chain corresponds to 121–139 (DRFVAICNPLHYSVIMNRS). Residues 140 to 160 (LCLWMAIGSWMSGVPVSMLQT) form a helical membrane-spanning segment. Topologically, residues 161–197 (AWMMALPFCGPNAVDHFFCDGPPVLKLVTVDTTMYEM) are extracellular. Residues 198–217 (QALASTLLFIMFPFCLILVS) traverse the membrane as a helical segment. Residues 218–237 (YTRIIITILRMSSATGRQKA) are Cytoplasmic-facing. The chain crosses the membrane as a helical span at residues 238–258 (FSTCSSHLIVVSLFYGTASLT). At 259–271 (YLRPKSNQSPESK) the chain is on the extracellular side. A helical membrane pass occupies residues 272 to 292 (KLVSLSYTVITPMLNPIIYGL). The Cytoplasmic portion of the chain corresponds to 293–316 (RNNEVKGAVKRTITQKVLQKLDVF).

It belongs to the G-protein coupled receptor 1 family.

It localises to the cell membrane. Its function is as follows. Odorant receptor. This is Olfactory receptor 10A7 (OR10A7) from Homo sapiens (Human).